Here is a 502-residue protein sequence, read N- to C-terminus: Chromosomal replication initiator protein DnaA (502 aa).

Residues 1–112 (MADDLSLGFT…PSTDHIDDNS (112 aa)) form a domain I, interacts with DnaA modulators region. The domain II stretch occupies residues 113-161 (SSADVLLTDDCGTDTDENYGEPLTGEYQGLPTYFTERPHHTESTVTGGT). The tract at residues 162 to 378 (SLNRRYTFET…GALIRVTAFA (217 aa)) is domain III, AAA+ region. ATP-binding residues include glycine 206, glycine 208, lysine 209, and threonine 210. Residues 379 to 502 (SLNKTAIDKA…TTRIRQRSKR (124 aa)) form a domain IV, binds dsDNA region.

Belongs to the DnaA family. Oligomerizes as a right-handed, spiral filament on DNA at oriC.

It is found in the cytoplasm. Functionally, plays an essential role in the initiation and regulation of chromosomal replication. ATP-DnaA binds to the origin of replication (oriC) to initiate formation of the DNA replication initiation complex once per cell cycle. Binds the DnaA box (a 9 base pair repeat at the origin) and separates the double-stranded (ds)DNA. Forms a right-handed helical filament on oriC DNA; dsDNA binds to the exterior of the filament while single-stranded (ss)DNA is stabiized in the filament's interior. The ATP-DnaA-oriC complex binds and stabilizes one strand of the AT-rich DNA unwinding element (DUE), permitting loading of DNA polymerase. After initiation quickly degrades to an ADP-DnaA complex that is not apt for DNA replication. Binds acidic phospholipids. The chain is Chromosomal replication initiator protein DnaA from Mycobacterium leprae (strain TN).